The sequence spans 150 residues: Aspartate 1-decarboxylase 1 (150 aa).

Residue serine 24 is the Schiff-base intermediate with substrate; via pyruvic acid of the active site. Residue serine 24 is modified to Pyruvic acid (Ser). Threonine 56 is a substrate binding site. Residue tyrosine 57 is the Proton donor of the active site. A substrate-binding site is contributed by 72-74 (GAA).

It belongs to the PanD family. Heterooctamer of four alpha and four beta subunits. Pyruvate is required as a cofactor. Post-translationally, is synthesized initially as an inactive proenzyme, which is activated by self-cleavage at a specific serine bond to produce a beta-subunit with a hydroxyl group at its C-terminus and an alpha-subunit with a pyruvoyl group at its N-terminus.

The protein resides in the cytoplasm. The enzyme catalyses L-aspartate + H(+) = beta-alanine + CO2. The protein operates within cofactor biosynthesis; (R)-pantothenate biosynthesis; beta-alanine from L-aspartate: step 1/1. Functionally, catalyzes the pyruvoyl-dependent decarboxylation of aspartate to produce beta-alanine. The chain is Aspartate 1-decarboxylase 1 from Mesorhizobium japonicum (strain LMG 29417 / CECT 9101 / MAFF 303099) (Mesorhizobium loti (strain MAFF 303099)).